We begin with the raw amino-acid sequence, 368 residues long: 1-deoxy-D-xylulose 5-phosphate reductoisomerase (368 aa).

NADPH-binding residues include Thr-10, Gly-11, Ser-12, Ile-13, Gln-38, and Asn-100. Lys-101 provides a ligand contact to 1-deoxy-D-xylulose 5-phosphate. Residue Glu-102 coordinates NADPH. Asp-125 lines the Mn(2+) pocket. Ser-126, Glu-127, Ser-151, and His-172 together coordinate 1-deoxy-D-xylulose 5-phosphate. Mn(2+) is bound at residue Glu-127. Gly-178 provides a ligand contact to NADPH. The 1-deoxy-D-xylulose 5-phosphate site is built by Ser-185, Asn-190, Lys-191, and Glu-194. Glu-194 is a Mn(2+) binding site.

Belongs to the DXR family. The cofactor is Mg(2+). Mn(2+) serves as cofactor.

The catalysed reaction is 2-C-methyl-D-erythritol 4-phosphate + NADP(+) = 1-deoxy-D-xylulose 5-phosphate + NADPH + H(+). It functions in the pathway isoprenoid biosynthesis; isopentenyl diphosphate biosynthesis via DXP pathway; isopentenyl diphosphate from 1-deoxy-D-xylulose 5-phosphate: step 1/6. In terms of biological role, catalyzes the NADPH-dependent rearrangement and reduction of 1-deoxy-D-xylulose-5-phosphate (DXP) to 2-C-methyl-D-erythritol 4-phosphate (MEP). The polypeptide is 1-deoxy-D-xylulose 5-phosphate reductoisomerase (Tropheryma whipplei (strain TW08/27) (Whipple's bacillus)).